We begin with the raw amino-acid sequence, 181 residues long: RING-H2 finger protein ATL72 (181 aa).

A helical transmembrane segment spans residues 34 to 54 (VIILAALLCALICALSLNSAL). An RING-type; atypical zinc finger spans residues 114–156 (CLICLGDFEDGEKVRVLPKCNHGFHVRCIDTWLLSRSSCPTCR).

Belongs to the RING-type zinc finger family. ATL subfamily.

Its subcellular location is the membrane. It catalyses the reaction S-ubiquitinyl-[E2 ubiquitin-conjugating enzyme]-L-cysteine + [acceptor protein]-L-lysine = [E2 ubiquitin-conjugating enzyme]-L-cysteine + N(6)-ubiquitinyl-[acceptor protein]-L-lysine.. The protein operates within protein modification; protein ubiquitination. The chain is RING-H2 finger protein ATL72 (ATL72) from Arabidopsis thaliana (Mouse-ear cress).